Consider the following 179-residue polypeptide: Acireductone dioxygenase (179 aa).

Residues His-88, His-90, Glu-94, and His-133 each contribute to the Fe(2+) site. Positions 88, 90, 94, and 133 each coordinate Ni(2+).

This sequence belongs to the acireductone dioxygenase (ARD) family. Monomer. Interacts with MMP14. Fe(2+) serves as cofactor. The cofactor is Ni(2+).

The protein localises to the cytoplasm. It is found in the nucleus. The protein resides in the cell membrane. The catalysed reaction is 1,2-dihydroxy-5-(methylsulfanyl)pent-1-en-3-one + O2 = 4-methylsulfanyl-2-oxobutanoate + formate + 2 H(+). It carries out the reaction 1,2-dihydroxy-5-(methylsulfanyl)pent-1-en-3-one + O2 = 3-(methylsulfanyl)propanoate + CO + formate + 2 H(+). Its pathway is amino-acid biosynthesis; L-methionine biosynthesis via salvage pathway; L-methionine from S-methyl-5-thio-alpha-D-ribose 1-phosphate: step 5/6. Catalyzes 2 different reactions between oxygen and the acireductone 1,2-dihydroxy-3-keto-5-methylthiopentene (DHK-MTPene) depending upon the metal bound in the active site. Fe-containing acireductone dioxygenase (Fe-ARD) produces formate and 2-keto-4-methylthiobutyrate (KMTB), the alpha-ketoacid precursor of methionine in the methionine recycle pathway. Ni-containing acireductone dioxygenase (Ni-ARD) produces methylthiopropionate, carbon monoxide and formate, and does not lie on the methionine recycle pathway. Also down-regulates cell migration mediated by MMP14. The protein is Acireductone dioxygenase of Macaca mulatta (Rhesus macaque).